Reading from the N-terminus, the 206-residue chain is ATP-dependent Clp protease proteolytic subunit 1 (206 aa).

S106 (nucleophile) is an active-site residue. H131 is an active-site residue.

The protein belongs to the peptidase S14 family. In terms of assembly, fourteen ClpP subunits assemble into 2 heptameric rings which stack back to back to give a disk-like structure with a central cavity, resembling the structure of eukaryotic proteasomes.

The protein resides in the cytoplasm. It carries out the reaction Hydrolysis of proteins to small peptides in the presence of ATP and magnesium. alpha-casein is the usual test substrate. In the absence of ATP, only oligopeptides shorter than five residues are hydrolyzed (such as succinyl-Leu-Tyr-|-NHMec, and Leu-Tyr-Leu-|-Tyr-Trp, in which cleavage of the -Tyr-|-Leu- and -Tyr-|-Trp bonds also occurs).. Cleaves peptides in various proteins in a process that requires ATP hydrolysis. Has a chymotrypsin-like activity. Plays a major role in the degradation of misfolded proteins. This Methylococcus capsulatus (strain ATCC 33009 / NCIMB 11132 / Bath) protein is ATP-dependent Clp protease proteolytic subunit 1.